The following is a 126-amino-acid chain: MAFSGTWQVYAQENYEEFLRAISLPEEVIKLAKDVKPVTEIQQNGSDFTITSKTPGKTVTNSFTIGKEAEITTMDGKKLKCIVKLDGGKLVCRTDRFSHIQEIKAGEMVETLTVGGTTMIRKSKKI.

4 residues coordinate cholate: lysine 57, lysine 77, histidine 99, and glutamine 101.

The protein belongs to the calycin superfamily. Fatty-acid binding protein (FABP) family. Expressed in the developing embryonic liver from 48 hpf. Also expressed in the liver of 5-day-old larvae. In adults, primarily expressed in the liver, with weak expression in the testis and intestine.

It is found in the cytoplasm. Binds hydrophobic ligands, such as cholate, in the cytoplasm. May be involved in intracellular lipid transport. Binds one cholate per subunit. The protein is Fatty acid-binding protein 10-A, liver basic (fabp10a) of Danio rerio (Zebrafish).